We begin with the raw amino-acid sequence, 309 residues long: Protease HtpX homolog (309 aa).

2 helical membrane-spanning segments follow: residues 7 to 27 (FILL…IGGP) and 28 to 48 (TGML…YWNA). Histidine 134 serves as a coordination point for Zn(2+). Glutamate 135 is a catalytic residue. Position 138 (histidine 138) interacts with Zn(2+). Transmembrane regions (helical) follow at residues 149-169 (VTAT…FFGG) and 177-197 (PGGL…AMLV). Glutamate 206 lines the Zn(2+) pocket. The interval 289–309 (TRGRSGTAVPTGATGKSGPWG) is disordered.

It belongs to the peptidase M48B family. Requires Zn(2+) as cofactor.

The protein resides in the cell inner membrane. This Caulobacter sp. (strain K31) protein is Protease HtpX homolog.